The chain runs to 512 residues: ATP synthase subunit alpha (512 aa).

An ATP-binding site is contributed by 169–176 (GDRQTGKT).

This sequence belongs to the ATPase alpha/beta chains family. In terms of assembly, F-type ATPases have 2 components, CF(1) - the catalytic core - and CF(0) - the membrane proton channel. CF(1) has five subunits: alpha(3), beta(3), gamma(1), delta(1), epsilon(1). CF(0) has three main subunits: a(1), b(2) and c(9-12). The alpha and beta chains form an alternating ring which encloses part of the gamma chain. CF(1) is attached to CF(0) by a central stalk formed by the gamma and epsilon chains, while a peripheral stalk is formed by the delta and b chains.

It is found in the cell inner membrane. The catalysed reaction is ATP + H2O + 4 H(+)(in) = ADP + phosphate + 5 H(+)(out). Functionally, produces ATP from ADP in the presence of a proton gradient across the membrane. The alpha chain is a regulatory subunit. The polypeptide is ATP synthase subunit alpha (Azoarcus sp. (strain BH72)).